The following is a 564-amino-acid chain: Sulfite reductase [NADPH] hemoprotein beta-component 1 (564 aa).

The [4Fe-4S] cluster site is built by Cys-426, Cys-432, Cys-471, and Cys-475. Siroheme is bound at residue Cys-475.

The protein belongs to the nitrite and sulfite reductase 4Fe-4S domain family. Alpha(8)-beta(8). The alpha component is a flavoprotein, the beta component is a hemoprotein. Siroheme serves as cofactor. [4Fe-4S] cluster is required as a cofactor.

The catalysed reaction is hydrogen sulfide + 3 NADP(+) + 3 H2O = sulfite + 3 NADPH + 4 H(+). Its pathway is sulfur metabolism; hydrogen sulfide biosynthesis; hydrogen sulfide from sulfite (NADPH route): step 1/1. Functionally, component of the sulfite reductase complex that catalyzes the 6-electron reduction of sulfite to sulfide. This is one of several activities required for the biosynthesis of L-cysteine from sulfate. This is Sulfite reductase [NADPH] hemoprotein beta-component 1 from Pectobacterium carotovorum subsp. carotovorum (strain PC1).